The following is a 177-amino-acid chain: ATP synthase subunit delta (177 aa).

It belongs to the ATPase delta chain family. As to quaternary structure, F-type ATPases have 2 components, F(1) - the catalytic core - and F(0) - the membrane proton channel. F(1) has five subunits: alpha(3), beta(3), gamma(1), delta(1), epsilon(1). F(0) has three main subunits: a(1), b(2) and c(10-14). The alpha and beta chains form an alternating ring which encloses part of the gamma chain. F(1) is attached to F(0) by a central stalk formed by the gamma and epsilon chains, while a peripheral stalk is formed by the delta and b chains.

Its subcellular location is the cell membrane. Its function is as follows. F(1)F(0) ATP synthase produces ATP from ADP in the presence of a proton or sodium gradient. F-type ATPases consist of two structural domains, F(1) containing the extramembraneous catalytic core and F(0) containing the membrane proton channel, linked together by a central stalk and a peripheral stalk. During catalysis, ATP synthesis in the catalytic domain of F(1) is coupled via a rotary mechanism of the central stalk subunits to proton translocation. Functionally, this protein is part of the stalk that links CF(0) to CF(1). It either transmits conformational changes from CF(0) to CF(1) or is implicated in proton conduction. The protein is ATP synthase subunit delta of Macrococcus caseolyticus (strain JCSC5402) (Macrococcoides caseolyticum).